A 101-amino-acid chain; its full sequence is Small ribosomal subunit protein bS18c (101 aa).

Belongs to the bacterial ribosomal protein bS18 family. In terms of assembly, part of the 30S ribosomal subunit.

The protein resides in the plastid. It is found in the chloroplast. The polypeptide is Small ribosomal subunit protein bS18c (Oenothera biennis (German evening primrose)).